An 80-amino-acid chain; its full sequence is Phosphoribosylformylglycinamidine synthase subunit PurS (80 aa).

It belongs to the PurS family. As to quaternary structure, homodimer. Part of the FGAM synthase complex composed of 1 PurL, 1 PurQ and 2 PurS subunits.

It localises to the cytoplasm. The catalysed reaction is N(2)-formyl-N(1)-(5-phospho-beta-D-ribosyl)glycinamide + L-glutamine + ATP + H2O = 2-formamido-N(1)-(5-O-phospho-beta-D-ribosyl)acetamidine + L-glutamate + ADP + phosphate + H(+). It functions in the pathway purine metabolism; IMP biosynthesis via de novo pathway; 5-amino-1-(5-phospho-D-ribosyl)imidazole from N(2)-formyl-N(1)-(5-phospho-D-ribosyl)glycinamide: step 1/2. Its function is as follows. Part of the phosphoribosylformylglycinamidine synthase complex involved in the purines biosynthetic pathway. Catalyzes the ATP-dependent conversion of formylglycinamide ribonucleotide (FGAR) and glutamine to yield formylglycinamidine ribonucleotide (FGAM) and glutamate. The FGAM synthase complex is composed of three subunits. PurQ produces an ammonia molecule by converting glutamine to glutamate. PurL transfers the ammonia molecule to FGAR to form FGAM in an ATP-dependent manner. PurS interacts with PurQ and PurL and is thought to assist in the transfer of the ammonia molecule from PurQ to PurL. In Archaeoglobus fulgidus (strain ATCC 49558 / DSM 4304 / JCM 9628 / NBRC 100126 / VC-16), this protein is Phosphoribosylformylglycinamidine synthase subunit PurS.